We begin with the raw amino-acid sequence, 64 residues long: Putative neurotoxin 6 (64 aa).

The signal sequence occupies residues 1–24 (MKNKFAALVITLFVLVLAIDNVTT).

The protein belongs to the scolopendra neurotoxin 6 family. In terms of processing, contains 3 disulfide bonds. As to expression, expressed by the venom gland.

The protein resides in the secreted. This Scolopendra mutilans (Chinese red-headed centipede) protein is Putative neurotoxin 6.